The sequence spans 3096 residues: MAAQGSPSSSPSDDSTTSGSLPELPPTSTATSRSPPESKGSSRSSLLQWTCPEDSLPLAVFYGPLDAKNPLLASCEKEIQELLGFMRKKKALATTEEEKHEFRRRCATSLFNIWTKYAPRLPADYYNEKLLKVGDSLCQMKEYKLALLQCYGRYLQQFNTNFDENKVDVTQFKATFFPKGFKDKTAGLTFHALSGKNMCNYQLVCDSDENLKNKESVVQCLHILSSLRLIMQVALPQEHLCWIIFNGTIYIYTICRKLMVIGQSSKALEYLLWASMCMESLVPLLSLRYLTWRATLYTAVCQCCYDCHAGIHGEAFARRALAKIDELRQLELMSSSKSQEESRRYFREATMKMAVMIFKRGVFESRRKNKAVFRPKIRINLREVQTLSWPRTVTERLLDEMFDSTASQFLAVLEALSDSNRRILQTGPIVTDEVEIHDVVSELFMAGKELLIMSNIGADGMLDFPKTSLLELMIGRKDVISVDAAVKFIKLAFTYEEWSLFESSAVHLIYFLQRQDDPESKKAEKDLTLLIAMEPLINVKRNKGLIFPLENYKEGQSTQIYLKKIAVHDTCLKTCGYSEDIFHLAATLYVCVCTAPQDVQPDKEIVVDTIMFLWQKCKLGIQRLNISRNDYAKFTQKISTNKWIYLLWQINEVIHCYKMEDIDIVVVAEVTLRLSEILESLGSPGRKFKQSLDVPLREGTNKFPGAPKGITEILPILQKNPVEQLLFAYKLLDRAIGGINLNCMLTSLPNGSSVIDHCYAKRTHHIDGDTYKPLASNSFMMDLHLELIQAQHRIAVVLLDKLQVLQTPTVSKDISTKGPEKLKQSGSTDCFTELNIMNKIKKNTLSKAIYLMQKALLIFEKDATSTSSWELLMEAYSLIQRIEAEQNALYSYQKYLESSKRKKSRVPPPPILLSRTHCSVTLKPAPFTSEVKVSWYCILGCKAEGSYGKVRLNNNHLPNSGEAIPADGKSVFEVKGLETNEKYVFAVAAYSNNGKLVGGAIGETTKPILVYPPLSTITARMFLTQVAYQVGNYELAKKVFSPVWDYFVASPLQDEQSVICLSNIITITQRRLHSDILAETSSILLYLFLRNIFVTSDIKIKEENLFCDNIKGNEIFPSQQIARLIECERVLVALELSNFLNDSSYALQAVTQCYGLLAPIIYHNIVLVPVVQILIKCIVVLQGLPSIVCSKKHTASFESIQHMIACCIFYITKILRSWREYDLAVMIINYGKKMLDITPGCKSLFDGSNEQEEMPEEDSSKKSLKTKKPQQILLPEKINEQLALLETHLLKLTKQYVTSELSGGEDPIFLYPVVLNWSVKGAVKEVMKFKQKPRFLEFFTQVMLKCMNEEKFHLMVEVTTPVHDFLKRRNESLLGLIKVKYKDSALNKKANKSLKFKAAVMEIGRSAEMQQRIRSKKKETLRDFIFKNPAISEMVAHERNRRTSVRKAAQRYLMDYLNPLILSYVKRKRFHRLSLEEMPWRAQMNLYLAGAHFNLVLQKLWECTKMKFGTSHMMVSFRSCDPNMFSLYNSGTVLPTRKLTVENYKAMLDFLLTAKKRKANLPSDAEEFSTFINSIMSDENMSKTQTVYDSDSQSGSSAKEKDRGANLCVMDHFMKIFLYCRRAMVLAHRGGYWTLLQNCCRALWNFTQELQILLKQAVDLDKTFPISQDGFLCTSVLPFYLGAELLIDMLIQLQNTSSIKPIEDKGEFSVPSCYGNIKNDNGGSSLTFEHPLDDVNVVDLKWIHDFVLKSLEVLYQVEKWETLVSLAIQFNTVSHERYTEQVTPLLVYAQRQLLLRIQKFKGPDITQQPCARYEAEYGEKITCRNFIGKQLKINSSTIEATSNCTDLLKMLISSEYSRAKALVCVPVDVTDTLRCFRETLEKSKYHNRSIRHSRKLLSLFLAQTQDVLQASNQRSLKVQALHSLGSLLIFAEKKRAAFKCWCQALDDIFRKPDVLHTWKEFGPSLTNVTNSHSPPGFKDYSEEFLSRVGIWGCLQGAVISAKIAQFIKSLNVEKKTDCCILSALLFQGLLRTTLPHPKAERCYAQYEITQLLPGIELFSDRYRADICSVIASLYYIIRELHFVRQNLIVLPLLALYQYFVSGICQDITRNLEARILKIEVLIDLRFFSEAFYEISQIFYGKNMPCPIPAGYKATGKMKIFQSFDSGKLLTSKENIQAIDELRNKGLPAVLVTIGQPHLLNKFNFVKAYFFLSVAATINCVPENKFKTVITNKSKPNLPNLEEIYSKDDGSSFYNLTKLKDEITLSMLKSMLLMEAEDRLNFLLSEVEQKTLSQCSAGELEIVVEARLQLAAVALQRHRAAYSAAIVFSTLTLLQDSKLFEKKVVQDDTENPVSPGTSVTENKDDSEFLDPISLNAREYFNIHLWLRCRLALVTAFVAQIHGIGIVKEDDMTDCLSLINEVCMEAKSAGDTELQAEFLTQAVILGLQEKHLKADIMTNLQDIIHLLEGNEFISPQSRLTLARSLVLLDDLTKAEKFKESPSSKTGKLNLLTRAHSILTEQMLAFGETIEFRSSNTKYANPLQPLKNIYLPHVMLLAKIKMRIGHTVAKQVYYKNKRKDPSKWLPALHLFDVALKLCRTTAVEEHEVEAEILFQKGKIERQILMEEKSPSFQLESLYEAIQLSLKNDQNSGLIRDSYLEMALLYFHLKKPKIKISGSPLTLKPPLRRSSSVKETSANKFEMYSSLAWIAIRAAAQVSEAVLAINLLIGKKNTRMHKVNQVALPNIPEFAALDLLSSYTDYLLDNYQVLFQTSCTFLYQNDDVCDSADGRKKTQTKVDITWILLLRYYIHLQRINNLSKLLASATPVSGISLPDDTLLTSLYNSELILRQKEVHFFLKKFLQLYSSSCIDEFPKELLCQLENPPLSEKDLRESSAKLYRDSSVQSILSFKPVSGSSCVDITPIEMVTQASNKELCFQWYIPPLDRPPKETEPMVLLLYAYNLKPLKISDVRHSTYNSTCVGSLWIPLNRVIAIHEKLSNLAQIAELSLPAAPEITSNENIYEVEVEEESVDNEMEDMIIQCCSEIASLFLNDKEPTPLSEVPFDISLPSIFNLERLFDLANGCILSGGSLFNWIVSIIP.

A compositionally biased stretch (low complexity) spans 1-45; that stretch reads MAAQGSPSSSPSDDSTTSGSLPELPPTSTATSRSPPESKGSSRSS. Disordered stretches follow at residues 1-46 and 1248-1267; these read MAAQ…RSSL and SNEQ…LKTK.

Belongs to the CFAP54 family.

The protein localises to the cytoplasm. It is found in the cytoskeleton. The protein resides in the cilium axoneme. Required for assembly and function of cilia and flagella. This chain is Cilia- and flagella-associated protein 54, found in Homo sapiens (Human).